The chain runs to 206 residues: Small ribosomal subunit protein eS1 (206 aa).

Belongs to the eukaryotic ribosomal protein eS1 family.

In Methanocorpusculum labreanum (strain ATCC 43576 / DSM 4855 / Z), this protein is Small ribosomal subunit protein eS1.